Here is a 133-residue protein sequence, read N- to C-terminus: MANNIKLSILTPQKTFYVGDVKEIITRTVEGEIGILPNHTDLVAFLTPTETILVEEDGSRKKVFTSTGILNVGESEVSFMCDASEWPDEIDIQRAETAKERAEKRLKTSNNIDVKRAELSLSRALARIKTKND.

It belongs to the ATPase epsilon chain family. In terms of assembly, F-type ATPases have 2 components, CF(1) - the catalytic core - and CF(0) - the membrane proton channel. CF(1) has five subunits: alpha(3), beta(3), gamma(1), delta(1), epsilon(1). CF(0) has three main subunits: a, b and c.

The protein resides in the cell membrane. Functionally, produces ATP from ADP in the presence of a proton gradient across the membrane. The chain is ATP synthase epsilon chain (atpC) from Clostridium acetobutylicum (strain ATCC 824 / DSM 792 / JCM 1419 / IAM 19013 / LMG 5710 / NBRC 13948 / NRRL B-527 / VKM B-1787 / 2291 / W).